A 104-amino-acid polypeptide reads, in one-letter code: Circadian clock oscillator protein KaiB (104 aa).

Belongs to the KaiB family. The KaiABC complex composition changes during the circadian cycle to control KaiC phosphorylation. Complexes KaiC(6), KaiA(2-4):KaiC(6), KaiB(6):KaiC(6) and KaiC(6):KaiB(6):KaiA(12) are among the most important forms, many form cooperatively. Undergoes a major conformational rearrangment; in the free state forms homotetramers as a dimer of dimers. When bound to the CI domain of KaiC switches to a monomeric thioredoxin-fold (KaiB(fs)). KaiB(fs) binds CikA, leading it to dephosphorylate phospho-RpaA.

Key component of the KaiABC oscillator complex, which constitutes the main circadian regulator in cyanobacteria. Complex composition changes during the circadian cycle to control KaiC phosphorylation. KaiA stimulates KaiC autophosphorylation, while KaiB sequesters KaiA, leading to KaiC autodephosphorylation. Phospho-Ser-431 KaiC accumulation triggers binding of KaiB to form the KaiB(6):KaiC(6) complex, leading to changes in output regulators CikA and SasA. KaiB switches to a thioredoxin-like fold (KaiB(fs)) when bound to KaiC. KaiB(6):KaiC(6) formation exposes a site for KaiA binding that sequesters KaiA from KaiC, making the KaiC(6):KaiB(6):KaiA(12) complex that results in KaiC autodephosphorylation. Functionally, a metamorphic protein which reversibly switches between an inactive tetrameric fold and a rare, thioredoxin-like monomeric fold (KaiB(fs)). KaiB(fs) binds phospho-KaiC, KaiA and CikA. KaiA and CikA compete for binding to KaiB(fs), and KaiB(fs) and SasA compete for binding to KaiC, thus the clock oscillator and output signal pathway are tightly coupled. The polypeptide is Circadian clock oscillator protein KaiB (Rippkaea orientalis (strain PCC 8801 / RF-1) (Cyanothece sp. (strain PCC 8801))).